The sequence spans 273 residues: Formamidopyrimidine-DNA glycosylase (273 aa).

Catalysis depends on Pro-2, which acts as the Schiff-base intermediate with DNA. Glu-3 functions as the Proton donor in the catalytic mechanism. The active-site Proton donor; for beta-elimination activity is Lys-59. Positions 92 and 111 each coordinate DNA. An FPG-type zinc finger spans residues 239–273 (KVYGKTDEPCVVCGTPIEKIKLNGRGTHFCPNCQK). Arg-263 serves as the catalytic Proton donor; for delta-elimination activity.

Belongs to the FPG family. As to quaternary structure, monomer. Zn(2+) serves as cofactor.

The catalysed reaction is Hydrolysis of DNA containing ring-opened 7-methylguanine residues, releasing 2,6-diamino-4-hydroxy-5-(N-methyl)formamidopyrimidine.. It carries out the reaction 2'-deoxyribonucleotide-(2'-deoxyribose 5'-phosphate)-2'-deoxyribonucleotide-DNA = a 3'-end 2'-deoxyribonucleotide-(2,3-dehydro-2,3-deoxyribose 5'-phosphate)-DNA + a 5'-end 5'-phospho-2'-deoxyribonucleoside-DNA + H(+). Its function is as follows. Involved in base excision repair of DNA damaged by oxidation or by mutagenic agents. Acts as a DNA glycosylase that recognizes and removes damaged bases. Has a preference for oxidized purines, such as 7,8-dihydro-8-oxoguanine (8-oxoG). Has AP (apurinic/apyrimidinic) lyase activity and introduces nicks in the DNA strand. Cleaves the DNA backbone by beta-delta elimination to generate a single-strand break at the site of the removed base with both 3'- and 5'-phosphates. The sequence is that of Formamidopyrimidine-DNA glycosylase from Listeria monocytogenes serovar 1/2a (strain ATCC BAA-679 / EGD-e).